A 216-amino-acid chain; its full sequence is Uracil phosphoribosyltransferase (216 aa).

GTP is bound by residues Arg-32, Arg-41, 75–78, and Lys-77; that span reads MGKI. A Phosphoserine modification is found at Ser-82. Arg-85 serves as a coordination point for 5-phospho-alpha-D-ribose 1-diphosphate. Arg-102 is a GTP binding site. Arg-110 contributes to the 5-phospho-alpha-D-ribose 1-diphosphate binding site. Arg-131 provides a ligand contact to GTP. Residues Asp-137 and 137–145 each bind 5-phospho-alpha-D-ribose 1-diphosphate; that span reads DPMLATGGS. Tyr-201 lines the D-ribose 5-phosphate pocket. Uracil is bound by residues Leu-202 and 207 to 209; that span reads GDF. Residue Asp-208 participates in 5-phospho-alpha-D-ribose 1-diphosphate binding.

Belongs to the UPRTase family. Mg(2+) is required as a cofactor.

The enzyme catalyses UMP + diphosphate = 5-phospho-alpha-D-ribose 1-diphosphate + uracil. The protein operates within pyrimidine metabolism; UMP biosynthesis via salvage pathway; UMP from uracil: step 1/1. Its activity is regulated as follows. Allosterically activated by GTP. In terms of biological role, catalyzes the conversion of uracil and 5-phospho-alpha-D-ribose 1-diphosphate (PRPP) to UMP and diphosphate in the pyrimidine salvage pathway. The protein is Uracil phosphoribosyltransferase (FUR1) of Saccharomyces cerevisiae (strain ATCC 204508 / S288c) (Baker's yeast).